A 252-amino-acid chain; its full sequence is Imidazole glycerol phosphate synthase subunit HisF (252 aa).

Residues Asp-11 and Asp-130 contribute to the active site.

Belongs to the HisA/HisF family. Heterodimer of HisH and HisF.

Its subcellular location is the cytoplasm. The enzyme catalyses 5-[(5-phospho-1-deoxy-D-ribulos-1-ylimino)methylamino]-1-(5-phospho-beta-D-ribosyl)imidazole-4-carboxamide + L-glutamine = D-erythro-1-(imidazol-4-yl)glycerol 3-phosphate + 5-amino-1-(5-phospho-beta-D-ribosyl)imidazole-4-carboxamide + L-glutamate + H(+). It participates in amino-acid biosynthesis; L-histidine biosynthesis; L-histidine from 5-phospho-alpha-D-ribose 1-diphosphate: step 5/9. Its function is as follows. IGPS catalyzes the conversion of PRFAR and glutamine to IGP, AICAR and glutamate. The HisF subunit catalyzes the cyclization activity that produces IGP and AICAR from PRFAR using the ammonia provided by the HisH subunit. The polypeptide is Imidazole glycerol phosphate synthase subunit HisF (Bacillus cereus (strain ZK / E33L)).